The chain runs to 184 residues: MGFLKILRKQRAREREMRILILGLDNAGKTTLMKKFLDEPTDTIEPTLGFDIKTVHFKDFQLNLWDVGGQKSLRSYWKNYFESTDALIWVVDSSDRERLTQCSEELKKLLQEERLSGASLLVLANKSDLPGAIDVNSIAQVLELQSIKTHHWKIFSCCALSGERLVQAMTWLCDDVGSRIFILD.

A lipid anchor (N-myristoyl glycine) is attached at Gly2. Residues 23 to 30 (GLDNAGKT), 66 to 70 (DVGGQ), Gly68, and 125 to 128 (NKSD) each bind GTP.

This sequence belongs to the small GTPase superfamily. Arf family.

It is found in the cytoplasm. It localises to the cell membrane. The protein localises to the cytoskeleton. The protein resides in the microtubule organizing center. Its subcellular location is the centrosome. GTP-binding protein that functions in embryogenesis, cytokinesis, germline development and microtubulule cytoskeleton dynamics. The polypeptide is ADP-ribosylation factor-like protein 2 (evl-20.1) (Caenorhabditis briggsae).